The following is a 507-amino-acid chain: ATP synthase subunit alpha, chloroplastic (507 aa).

170–177 serves as a coordination point for ATP; the sequence is GDRQTGKT. Residue serine 383 is modified to Phosphoserine.

This sequence belongs to the ATPase alpha/beta chains family. As to quaternary structure, F-type ATPases have 2 components, CF(1) - the catalytic core - and CF(0) - the membrane proton channel. CF(1) has five subunits: alpha(3), beta(3), gamma(1), delta(1), epsilon(1). CF(0) has four main subunits: a, b, b' and c. Post-translationally, only phosphorylated in mesophyll cells, and only when cells are grown under high rather than low light regimes (70 vs 900 umol photons/m-2/s).

It is found in the plastid. The protein resides in the chloroplast thylakoid membrane. The catalysed reaction is ATP + H2O + 4 H(+)(in) = ADP + phosphate + 5 H(+)(out). Its function is as follows. Produces ATP from ADP in the presence of a proton gradient across the membrane. The alpha chain is a regulatory subunit. The protein is ATP synthase subunit alpha, chloroplastic of Zea mays (Maize).